A 370-amino-acid chain; its full sequence is tRNA-specific 2-thiouridylase MnmA (370 aa).

Residues 11–18 (GMSGGVDS) and Met37 each bind ATP. Residues 97–99 (NPD) form an interaction with target base in tRNA region. Cys102 (nucleophile) is an active-site residue. A disulfide bond links Cys102 and Cys199. ATP is bound at residue Gly126. The tract at residues 149 to 151 (KDQ) is interaction with tRNA. Catalysis depends on Cys199, which acts as the Cysteine persulfide intermediate. An interaction with tRNA region spans residues 307 to 308 (RY).

Belongs to the MnmA/TRMU family.

The protein localises to the cytoplasm. It catalyses the reaction S-sulfanyl-L-cysteinyl-[protein] + uridine(34) in tRNA + AH2 + ATP = 2-thiouridine(34) in tRNA + L-cysteinyl-[protein] + A + AMP + diphosphate + H(+). Functionally, catalyzes the 2-thiolation of uridine at the wobble position (U34) of tRNA, leading to the formation of s(2)U34. The sequence is that of tRNA-specific 2-thiouridylase MnmA from Staphylococcus haemolyticus (strain JCSC1435).